The chain runs to 298 residues: Protoheme IX farnesyltransferase (298 aa).

Helical transmembrane passes span 24–44 (VIQL…PGLP), 49–69 (LQLA…AAAF), 100–120 (LLFS…WVNP), 121–141 (LTMW…TVIL), 149–169 (IVIG…AMAG), 175–195 (ALIL…ALAL), 220–240 (LMVL…YVYG), 244–264 (WLYL…AFYL), and 277–297 (FRFS…DHYL).

It belongs to the UbiA prenyltransferase family. Protoheme IX farnesyltransferase subfamily.

The protein localises to the cell inner membrane. It catalyses the reaction heme b + (2E,6E)-farnesyl diphosphate + H2O = Fe(II)-heme o + diphosphate. Its pathway is porphyrin-containing compound metabolism; heme O biosynthesis; heme O from protoheme: step 1/1. Converts heme B (protoheme IX) to heme O by substitution of the vinyl group on carbon 2 of heme B porphyrin ring with a hydroxyethyl farnesyl side group. The protein is Protoheme IX farnesyltransferase of Albidiferax ferrireducens (strain ATCC BAA-621 / DSM 15236 / T118) (Rhodoferax ferrireducens).